The sequence spans 355 residues: uncharacterized protein (355 aa).

Positions Met1–Arg104 are disordered. Position 19 is an N6-acetyllysine (Lys19). The segment covering Glu45–Met54 has biased composition (acidic residues). Ser175 carries the phosphoserine modification. Disordered stretches follow at residues Pro247–Lys310 and Ser325–Pro355. Tyr293 is modified (phosphotyrosine). Position 294 is a phosphoserine (Ser294). Over residues Ser325 to Thr334 the composition is skewed to polar residues. A compositionally biased stretch (low complexity) spans Leu336–Pro348.

This is an uncharacterized protein from Homo sapiens (Human).